A 339-amino-acid polypeptide reads, in one-letter code: Phosphate acyltransferase (339 aa).

It belongs to the PlsX family. As to quaternary structure, homodimer. Probably interacts with PlsY.

Its subcellular location is the cytoplasm. It catalyses the reaction a fatty acyl-[ACP] + phosphate = an acyl phosphate + holo-[ACP]. It functions in the pathway lipid metabolism; phospholipid metabolism. Catalyzes the reversible formation of acyl-phosphate (acyl-PO(4)) from acyl-[acyl-carrier-protein] (acyl-ACP). This enzyme utilizes acyl-ACP as fatty acyl donor, but not acyl-CoA. In Helicobacter acinonychis (strain Sheeba), this protein is Phosphate acyltransferase.